The chain runs to 555 residues: Carboxylic ester hydrolase (555 aa).

An N-terminal signal peptide occupies residues 1–19 (MELSVIALLLLGFVNFSWQ). Cys-86 and Cys-107 are joined by a disulfide. Asn-120 and Asn-144 each carry an N-linked (GlcNAc...) asparagine glycan. The Acyl-ester intermediate role is filled by Ser-211. An intrachain disulfide couples Cys-263 to Cys-274. Catalysis depends on Glu-336, which acts as the Charge relay system. 2 N-linked (GlcNAc...) asparagine glycosylation sites follow: Asn-369 and Asn-397. His-459 functions as the Charge relay system in the catalytic mechanism. N-linked (GlcNAc...) asparagine glycans are attached at residues Asn-473 and Asn-533.

The protein belongs to the type-B carboxylesterase/lipase family. In terms of processing, N-glycosylated. Expressed in several tissues, including epidermis (at protein level), fat body (at protein level), gut (at protein level), muscle (at protein level), and venom gland (at protein level).

Its subcellular location is the secreted. It catalyses the reaction a carboxylic ester + H2O = an alcohol + a carboxylate + H(+). Lipolytic agent that may be involved in distributing the venom via degradation of blood triglycerides. The recombinant protein degrades triglycerides and exhibits high lipolytic activity toward long-chain triglycerides (tested on tributyrin, trioctanoin and triolein). Does not affect mammalian cells. The protein is Carboxylic ester hydrolase (vCaE) of Bombus ignitus (Bumblebee).